The chain runs to 313 residues: Protein-methionine-sulfoxide reductase catalytic subunit MsrP (313 aa).

Positions 1-44 (MARWRPDMAEREATPEALYLRRREFLALGAAGAVGLLVARGARA) form a signal peptide, tat-type signal. Mo-molybdopterin is bound by residues Asn76, 79–80 (YE), Cys134, Thr169, Asn217, Arg222, and 233–235 (GAK).

The protein belongs to the MsrP family. As to quaternary structure, heterodimer of a catalytic subunit (MsrP) and a heme-binding subunit (MsrQ). It depends on Mo-molybdopterin as a cofactor. In terms of processing, predicted to be exported by the Tat system. The position of the signal peptide cleavage has not been experimentally proven.

It localises to the periplasm. The enzyme catalyses L-methionyl-[protein] + a quinone + H2O = L-methionyl-(S)-S-oxide-[protein] + a quinol. It carries out the reaction L-methionyl-[protein] + a quinone + H2O = L-methionyl-(R)-S-oxide-[protein] + a quinol. In terms of biological role, part of the MsrPQ system that repairs oxidized periplasmic proteins containing methionine sulfoxide residues (Met-O), using respiratory chain electrons. Thus protects these proteins from oxidative-stress damage caused by reactive species of oxygen and chlorine generated by the host defense mechanisms. MsrPQ is essential for the maintenance of envelope integrity under bleach stress, rescuing a wide series of structurally unrelated periplasmic proteins from methionine oxidation. The catalytic subunit MsrP is non-stereospecific, being able to reduce both (R-) and (S-) diastereoisomers of methionine sulfoxide. The polypeptide is Protein-methionine-sulfoxide reductase catalytic subunit MsrP (Anaeromyxobacter sp. (strain K)).